Here is a 336-residue protein sequence, read N- to C-terminus: Dihydroorotate dehydrogenase (quinone) (336 aa).

FMN contacts are provided by residues A62–K66 and T86. K66 is a binding site for substrate. N111–F115 serves as a coordination point for substrate. N139 and N172 together coordinate FMN. N172 contacts substrate. The active-site Nucleophile is the S175. Residue N177 participates in substrate binding. Residues K217 and T245 each contribute to the FMN site. N246–T247 is a substrate binding site. Residues G268, G297, and Y318 to S319 each bind FMN.

This sequence belongs to the dihydroorotate dehydrogenase family. Type 2 subfamily. In terms of assembly, monomer. It depends on FMN as a cofactor.

The protein resides in the cell membrane. It carries out the reaction (S)-dihydroorotate + a quinone = orotate + a quinol. The protein operates within pyrimidine metabolism; UMP biosynthesis via de novo pathway; orotate from (S)-dihydroorotate (quinone route): step 1/1. In terms of biological role, catalyzes the conversion of dihydroorotate to orotate with quinone as electron acceptor. The protein is Dihydroorotate dehydrogenase (quinone) of Pectobacterium atrosepticum (strain SCRI 1043 / ATCC BAA-672) (Erwinia carotovora subsp. atroseptica).